We begin with the raw amino-acid sequence, 196 residues long: uncharacterized protein (196 aa).

Basic and acidic residues predominate over residues serine 122 to threonine 135. The interval serine 122–arginine 150 is disordered.

This is an uncharacterized protein from Leptospira interrogans.